A 458-amino-acid chain; its full sequence is ATP synthase subunit beta (458 aa).

148–155 (GGAGVGKT) lines the ATP pocket.

This sequence belongs to the ATPase alpha/beta chains family. As to quaternary structure, F-type ATPases have 2 components, CF(1) - the catalytic core - and CF(0) - the membrane proton channel. CF(1) has five subunits: alpha(3), beta(3), gamma(1), delta(1), epsilon(1). CF(0) has three main subunits: a(1), b(2) and c(9-12). The alpha and beta chains form an alternating ring which encloses part of the gamma chain. CF(1) is attached to CF(0) by a central stalk formed by the gamma and epsilon chains, while a peripheral stalk is formed by the delta and b chains.

It is found in the cell inner membrane. It carries out the reaction ATP + H2O + 4 H(+)(in) = ADP + phosphate + 5 H(+)(out). Functionally, produces ATP from ADP in the presence of a proton gradient across the membrane. The catalytic sites are hosted primarily by the beta subunits. In Stutzerimonas stutzeri (strain A1501) (Pseudomonas stutzeri), this protein is ATP synthase subunit beta.